The chain runs to 775 residues: 5-methyltetrahydropteroyltriglutamate--homocysteine methyltransferase (775 aa).

5-methyltetrahydropteroyltri-L-glutamate is bound by residues 16-19 (REMK) and Lys-115. Residues 435 to 437 (IGS) and Glu-488 contribute to the L-homocysteine site. L-methionine is bound by residues 435–437 (IGS) and Glu-488. 5-methyltetrahydropteroyltri-L-glutamate is bound by residues 519–520 (RC) and Trp-565. L-homocysteine is bound at residue Asp-603. Asp-603 serves as a coordination point for L-methionine. Glu-609 is a binding site for 5-methyltetrahydropteroyltri-L-glutamate. Zn(2+)-binding residues include His-645, Cys-647, and Glu-669. His-698 (proton donor) is an active-site residue. Cys-730 contributes to the Zn(2+) binding site.

It belongs to the vitamin-B12 independent methionine synthase family. It depends on Zn(2+) as a cofactor.

It carries out the reaction 5-methyltetrahydropteroyltri-L-glutamate + L-homocysteine = tetrahydropteroyltri-L-glutamate + L-methionine. It participates in amino-acid biosynthesis; L-methionine biosynthesis via de novo pathway; L-methionine from L-homocysteine (MetE route): step 1/1. Its function is as follows. Catalyzes the transfer of a methyl group from 5-methyltetrahydrofolate to homocysteine resulting in methionine formation. The protein is 5-methyltetrahydropteroyltriglutamate--homocysteine methyltransferase of Coxiella burnetii (strain Dugway 5J108-111).